A 483-amino-acid chain; its full sequence is Regulatory protein ViaA (483 aa).

The protein belongs to the ViaA family. Homodimer. Interacts with RavA.

The protein resides in the cytoplasm. Component of the RavA-ViaA chaperone complex, which may act on the membrane to optimize the function of some of the respiratory chains. ViaA stimulates the ATPase activity of RavA. The chain is Regulatory protein ViaA from Salmonella agona (strain SL483).